A 421-amino-acid polypeptide reads, in one-letter code: CaM kinase-like vesicle-associated protein (421 aa).

The Protein kinase domain occupies 24–284; sequence YDLGQVVKSE…AQEAIAHEWI (261 aa). Positions 326–421 are disordered; it reads ASEQGDTGAS…PQMLPQRKGY (96 aa). Low complexity-rich tracts occupy residues 330–340 and 390–406; these read GDTGASGLAAG and QQQA…QQAR.

This sequence belongs to the protein kinase superfamily. CAMK Ser/Thr protein kinase family. As to quaternary structure, interacts with calmodulin, in the presence of calcium. Ca(2+) serves as cofactor. Ubiquitously expressed.

Its subcellular location is the cytoplasmic vesicle membrane. Its function is as follows. Does not appear to have detectable kinase activity. The chain is CaM kinase-like vesicle-associated protein (camkv) from Takifugu rubripes (Japanese pufferfish).